A 458-amino-acid chain; its full sequence is Adenylosuccinate synthetase (458 aa).

GTP is bound by residues 17-23 (GDEGKGK) and 45-47 (GHT). The active-site Proton acceptor is the aspartate 18. Mg(2+) contacts are provided by aspartate 18 and glycine 45. IMP is bound by residues 18-21 (DEGK), 43-46 (NAGH), threonine 137, arginine 151, glutamine 247, threonine 262, and arginine 330. Histidine 46 acts as the Proton donor in catalysis. 326–332 (VTTGRSR) contacts substrate. GTP-binding positions include arginine 332, 358-360 (KLD), and 440-442 (STG).

It belongs to the adenylosuccinate synthetase family. In terms of assembly, homodimer. The cofactor is Mg(2+).

It is found in the cytoplasm. It catalyses the reaction IMP + L-aspartate + GTP = N(6)-(1,2-dicarboxyethyl)-AMP + GDP + phosphate + 2 H(+). It functions in the pathway purine metabolism; AMP biosynthesis via de novo pathway; AMP from IMP: step 1/2. Plays an important role in the de novo pathway of purine nucleotide biosynthesis. Catalyzes the first committed step in the biosynthesis of AMP from IMP. The sequence is that of Adenylosuccinate synthetase from Albidiferax ferrireducens (strain ATCC BAA-621 / DSM 15236 / T118) (Rhodoferax ferrireducens).